The chain runs to 450 residues: Putative gustatory receptor 28a (450 aa).

The Cytoplasmic portion of the chain corresponds to 1–47 (MAFKLWERFSQADNVFQALRPLTFISLLGLAPFRLNLNPRKEVQTSK). Residues 48-68 (FSFFAGIVHFLFFVLCFGISV) form a helical membrane-spanning segment. At 69–87 (KEGDSIIGYFFQTNITRFS) the chain is on the extracellular side. The N-linked (GlcNAc...) asparagine glycan is linked to Asn82. A helical membrane pass occupies residues 88–108 (DGTLRLTGILAMSTIFGFAMF). Residues 109–138 (KRQRLVSIIQNNIVVDEIFVRLGMKLDYRR) lie on the Cytoplasmic side of the membrane. Residues 139-159 (ILLSSFLISLGMLLFNVIYLC) form a helical membrane-spanning segment. The Extracellular portion of the chain corresponds to 160 to 171 (VSYSLLVSATIS). A helical membrane pass occupies residues 172 to 192 (PSFVTFTTFALPHINISLMVF). Residues 193-292 (KFLCTTDLAR…CQTIEEYFTY (100 aa)) are Cytoplasmic-facing. The helical transmembrane segment at 293 to 313 (PLLGIIAISFLFILFDDFYIL) threads the bilayer. Over 314–329 (EAILNPKRLDVFEADE) the chain is Extracellular. The chain crosses the membrane as a helical span at residues 330–350 (FFAFFLMQLIWYIVIIVLIVE). The Cytoplasmic segment spans residues 351-407 (GSSRTILHSSYTAAIVHKILNITDDPELRDRLFRLSLQLSHRKVLFTAAGLFRLDRT). A helical membrane pass occupies residues 408-424 (LIFTITGAATCYLIILI). The Extracellular portion of the chain corresponds to 425-450 (QFRFTHHMDDTSSNSTNNLHSIHLGD). A glycan (N-linked (GlcNAc...) asparagine) is linked at Asn438.

This sequence belongs to the insect chemoreceptor superfamily. Gustatory receptor (GR) family. Gr2a subfamily. In terms of tissue distribution, in addition to expression in a large number of taste neurons, Gr28a is also expressed in a few nonchemosensory neurons, including the campaniform sensilla of the wing, leg stretch receptors, and multiple dendritic (MD) neurons in the abdomen. In larvea, is expressed in neurons of the terminal external chemosensory organ, the dorsal external chemosensory organ, as well as in the ventral and posterior pharyngeal sense organ.

Its subcellular location is the cell membrane. Its function is as follows. Probable gustatory receptor which mediates acceptance or avoidance behavior, depending on its substrates. Atypical expression also suggests nongustatory roles in the nervous system and tissues involved in proprioception, hygroreception, and other sensory modalities. It is also possible that it has chemosensory roles in the detection of internal ligands. This Drosophila melanogaster (Fruit fly) protein is Putative gustatory receptor 28a (Gr28a).